We begin with the raw amino-acid sequence, 347 residues long: Elongation factor Ts (347 aa).

The segment at 80–83 (TDFV) is involved in Mg(2+) ion dislocation from EF-Tu.

Belongs to the EF-Ts family.

The protein localises to the cytoplasm. Functionally, associates with the EF-Tu.GDP complex and induces the exchange of GDP to GTP. It remains bound to the aminoacyl-tRNA.EF-Tu.GTP complex up to the GTP hydrolysis stage on the ribosome. This Streptococcus gordonii (strain Challis / ATCC 35105 / BCRC 15272 / CH1 / DL1 / V288) protein is Elongation factor Ts.